The following is an 804-amino-acid chain: Leucine--tRNA ligase (804 aa).

The 'HIGH' region signature appears at P40 to H51. The short motif at K576–S580 is the 'KMSKS' region element. K579 contributes to the ATP binding site.

This sequence belongs to the class-I aminoacyl-tRNA synthetase family.

It is found in the cytoplasm. The enzyme catalyses tRNA(Leu) + L-leucine + ATP = L-leucyl-tRNA(Leu) + AMP + diphosphate. The protein is Leucine--tRNA ligase of Bacillus velezensis (strain DSM 23117 / BGSC 10A6 / LMG 26770 / FZB42) (Bacillus amyloliquefaciens subsp. plantarum).